The primary structure comprises 443 residues: Tubulin epsilon and delta complex protein 2 (443 aa).

Residues 8–33 (RRLVAELRDALDSCAERQRQLEQSLR) are a coiled coil. Disordered regions lie at residues 45 to 72 (AETP…PSPQ) and 93 to 146 (GLSK…PWVP). Low complexity predominate over residues 106–124 (LKSGSASTATKASAPPSTS).

As to quaternary structure, interacts with TEDC1. Found in a complex with TEDC1, TEDC2, TUBE1 and TUBD1.

The protein resides in the cell projection. It is found in the cilium. Its subcellular location is the cytoplasm. The protein localises to the cytoskeleton. It localises to the microtubule organizing center. The protein resides in the centrosome. It is found in the centriole. Functionally, acts as a positive regulator of ciliary hedgehog signaling. Required for centriole stability. The chain is Tubulin epsilon and delta complex protein 2 from Bos taurus (Bovine).